Consider the following 37-residue polypeptide: Large ribosomal subunit protein bL36 (37 aa).

This sequence belongs to the bacterial ribosomal protein bL36 family.

The polypeptide is Large ribosomal subunit protein bL36 (Nocardioides sp. (strain ATCC BAA-499 / JS614)).